The following is a 340-amino-acid chain: CMP-N-acetylneuraminate-beta-galactosamide-alpha-2,3-sialyltransferase 1 (340 aa).

The Cytoplasmic segment spans residues 1–13 (MVTLRKRTLKVLT). A helical; Signal-anchor for type II membrane protein transmembrane segment spans residues 14 to 34 (FLVLFIFLTSFFLNYSHTMVA). Over 35-340 (TTWFPKQMVL…INKIRIFKGR (306 aa)) the chain is Lumenal. 3 cysteine pairs are disulfide-bonded: Cys59–Cys64, Cys61–Cys139, and Cys142–Cys281. Asn79 carries N-linked (GlcNAc...) asparagine glycosylation. Gln105 contributes to the substrate binding site. The N-linked (GlcNAc...) asparagine glycan is linked to Asn114. The substrate site is built by Asn147 and Asn170. N-linked (GlcNAc...) asparagine glycosylation occurs at Asn201. Residues Tyr230, Tyr266, Gly270, Gly290, His299, and His316 each coordinate substrate. The N-linked (GlcNAc...) asparagine glycan is linked to Asn323.

This sequence belongs to the glycosyltransferase 29 family. In terms of processing, the soluble form derives from the membrane form by proteolytic processing. Expressed in several tissues. Highest expression in lung, liver, skeletal muscle, kidney, pancreas, spleen and placenta.

Its subcellular location is the golgi apparatus. It localises to the golgi stack membrane. The protein resides in the trans-Golgi network membrane. It is found in the secreted. The enzyme catalyses a beta-D-galactosyl-(1-&gt;3)-N-acetyl-alpha-D-galactosaminyl derivative + CMP-N-acetyl-beta-neuraminate = an N-acetyl-alpha-neuraminyl-(2-&gt;3)-beta-D-galactosyl-(1-&gt;3)-N-acetyl-alpha-D-galactosaminyl derivative + CMP + H(+). The catalysed reaction is a ganglioside GM1 + CMP-N-acetyl-beta-neuraminate = a ganglioside GD1a + CMP + H(+). It carries out the reaction a ganglioside GM1 (d18:1(4E)) + CMP-N-acetyl-beta-neuraminate = a ganglioside GD1a (d18:1(4E)) + CMP + H(+). It catalyses the reaction ganglioside GM1 (d18:1(4E)/18:0) + CMP-N-acetyl-beta-neuraminate = ganglioside GD1a (18:1(4E)/18:0) + CMP + H(+). The enzyme catalyses a ganglioside GA1 + CMP-N-acetyl-beta-neuraminate = a ganglioside GM1b + CMP + H(+). The catalysed reaction is a ganglioside GA1 (d18:1(4E)) + CMP-N-acetyl-beta-neuraminate = a ganglioside GM1b (d18:1(4E)) + CMP + H(+). It carries out the reaction a ganglioside GD1b + CMP-N-acetyl-beta-neuraminate = a ganglioside GT1b + CMP + H(+). It catalyses the reaction a 3-O-[beta-D-galactosyl-(1-&gt;3)-N-acetyl-alpha-D-galactosaminyl]-L-threonyl-[protein] + CMP-N-acetyl-beta-neuraminate = a 3-O-[N-acetyl-alpha-neuraminyl-(2-&gt;3)-beta-D-galactosyl-(1-&gt;3)-N-acetyl-alpha-D-galactosaminyl]-L-threonyl-[protein] + CMP + H(+). The enzyme catalyses a 3-O-[beta-D-galactosyl-(1-&gt;3)-N-acetyl-alpha-D-galactosaminyl]-L-seryl-[protein] + CMP-N-acetyl-beta-neuraminate = 3-O-[N-acetyl-alpha-neuraminyl-(2-&gt;3)-beta-D-galactosyl-(1-&gt;3)-N-acetyl-alpha-D-galactosaminyl]-L-seryl-[protein] + CMP + H(+). It functions in the pathway protein modification; protein glycosylation. It participates in glycolipid biosynthesis. In terms of biological role, a beta-galactoside alpha2-&gt;3 sialyltransferase involved in terminal sialylation of glycoproteins and glycolipids. Catalyzes the transfer of sialic acid (N-acetyl-neuraminic acid; Neu5Ac) from the nucleotide sugar donor CMP-Neu5Ac onto acceptor Galbeta-(1-&gt;3)-GalNAc-terminated glycoconjugates through an alpha2-3 linkage. Adds sialic acid to the core 1 O-glycan, Galbeta-(1-&gt;3)-GalNAc-O-Ser/Thr, which is a major structure of mucin-type O-glycans. As part of a homeostatic mechanism that regulates CD8-positive T cell numbers, sialylates core 1 O-glycans of T cell glycoproteins, SPN/CD43 and PTPRC/CD45. Prevents premature apoptosis of thymic CD8-positive T cells prior to peripheral emigration, whereas in the secondary lymphoid organs controls the survival of CD8-positive memory T cells generated following a successful immune response. Transfers sialic acid to asialofetuin, presumably onto Galbeta-(1-&gt;3)-GalNAc-O-Ser. Sialylates GM1a, GA1 and GD1b gangliosides to form GD1a, GM1b and GT1b, respectively. This chain is CMP-N-acetylneuraminate-beta-galactosamide-alpha-2,3-sialyltransferase 1, found in Homo sapiens (Human).